The chain runs to 161 residues: ATP synthase subunit b (161 aa).

A helical membrane pass occupies residues 2–22 (VIEWGTALYQLLAFAVLLLIL).

It belongs to the ATPase B chain family. F-type ATPases have 2 components, F(1) - the catalytic core - and F(0) - the membrane proton channel. F(1) has five subunits: alpha(3), beta(3), gamma(1), delta(1), epsilon(1). F(0) has three main subunits: a(1), b(2) and c(10-14). The alpha and beta chains form an alternating ring which encloses part of the gamma chain. F(1) is attached to F(0) by a central stalk formed by the gamma and epsilon chains, while a peripheral stalk is formed by the delta and b chains.

The protein resides in the cell membrane. In terms of biological role, f(1)F(0) ATP synthase produces ATP from ADP in the presence of a proton or sodium gradient. F-type ATPases consist of two structural domains, F(1) containing the extramembraneous catalytic core and F(0) containing the membrane proton channel, linked together by a central stalk and a peripheral stalk. During catalysis, ATP synthesis in the catalytic domain of F(1) is coupled via a rotary mechanism of the central stalk subunits to proton translocation. Functionally, component of the F(0) channel, it forms part of the peripheral stalk, linking F(1) to F(0). This chain is ATP synthase subunit b, found in Shouchella clausii (strain KSM-K16) (Alkalihalobacillus clausii).